We begin with the raw amino-acid sequence, 178 residues long: Aminoglycoside 2'-N-acetyltransferase (178 aa).

Positions 8–171 (LHTSQLTLSE…VDFTASLYCD (164 aa)) constitute an N-acetyltransferase domain. Substrate contacts are provided by residues Asp32 and 79–80 (EA). Residues 81–83 (MVV) and 88–93 (RRQGIG) contribute to the CoA site. Substrate-binding positions include Ser114 and 148–149 (EE).

This sequence belongs to the AAC(2')-I acetyltransferase family. Homodimer.

The enzyme catalyses gentamicin C1a + acetyl-CoA = N(2')-acetylgentamicin C1a + CoA + H(+). Its function is as follows. Catalyzes the coenzyme A-dependent acetylation of the 2' hydroxyl or amino group of a broad spectrum of aminoglycosides. It confers resistance to aminoglycosides. This is Aminoglycoside 2'-N-acetyltransferase (aac) from Providencia stuartii.